A 456-amino-acid polypeptide reads, in one-letter code: Serine--tRNA ligase (456 aa).

Positions 49–69 (HERNEVSSTIGELKQAGEEEA) are disordered. 241–243 (TAE) serves as a coordination point for L-serine. Residues 272 to 274 (RQE) and Val-288 contribute to the ATP site. Glu-295 contacts L-serine. 368-371 (EVSS) is an ATP binding site. Ser-404 provides a ligand contact to L-serine.

Belongs to the class-II aminoacyl-tRNA synthetase family. Type-1 seryl-tRNA synthetase subfamily. In terms of assembly, homodimer. The tRNA molecule binds across the dimer.

The protein localises to the cytoplasm. The catalysed reaction is tRNA(Ser) + L-serine + ATP = L-seryl-tRNA(Ser) + AMP + diphosphate + H(+). The enzyme catalyses tRNA(Sec) + L-serine + ATP = L-seryl-tRNA(Sec) + AMP + diphosphate + H(+). It participates in aminoacyl-tRNA biosynthesis; selenocysteinyl-tRNA(Sec) biosynthesis; L-seryl-tRNA(Sec) from L-serine and tRNA(Sec): step 1/1. Catalyzes the attachment of serine to tRNA(Ser). Is also able to aminoacylate tRNA(Sec) with serine, to form the misacylated tRNA L-seryl-tRNA(Sec), which will be further converted into selenocysteinyl-tRNA(Sec). The polypeptide is Serine--tRNA ligase (Halorubrum lacusprofundi (strain ATCC 49239 / DSM 5036 / JCM 8891 / ACAM 34)).